The sequence spans 27 residues: Endoglucanase gh5 (27 aa).

The active-site Nucleophile is Glu-6.

The catalysed reaction is Endohydrolysis of (1-&gt;4)-beta-D-glucosidic linkages in cellulose, lichenin and cereal beta-D-glucans.. Its activity is regulated as follows. Activity is stimulated by zinc ions, potassium ions and DTT. Activity is inhibited by manganese and chloride ions. Endoglucanase (EG) that cleaves the internal beta-1,4-glucosidic bonds in cellulose. This chain is Endoglucanase gh5, found in Fomes meliae (Fomitopsis meliae).